The sequence spans 118 residues: Holo-[acyl-carrier-protein] synthase (118 aa).

Mg(2+) is bound by residues aspartate 6 and glutamate 55.

The protein belongs to the P-Pant transferase superfamily. AcpS family. Mg(2+) is required as a cofactor.

It is found in the cytoplasm. The enzyme catalyses apo-[ACP] + CoA = holo-[ACP] + adenosine 3',5'-bisphosphate + H(+). Transfers the 4'-phosphopantetheine moiety from coenzyme A to a Ser of acyl-carrier-protein. This chain is Holo-[acyl-carrier-protein] synthase, found in Chlorobium chlorochromatii (strain CaD3).